A 501-amino-acid chain; its full sequence is Orsellinic acid/F9775 biosynthesis cluster protein D (501 aa).

A disordered region spans residues 137 to 189; it reads EVTPTTEDEDDEENESENDEEEGDVDLEEQEDDNGGRQSTTVTTSPGPSAPSV. A compositionally biased stretch (acidic residues) spans 142–169; the sequence is TEDEDDEENESENDEEEGDVDLEEQEDD. A compositionally biased stretch (polar residues) spans 172–183; that stretch reads GRQSTTVTTSPG.

Part of the gene cluster that mediates the biosynthesis of orsellinic acid, as well as of the cathepsin K inhibitors F9775 A and F9775 B. The non-reducing polyketide synthase orsA produces orsellinic acid by condensing acetyl-CoA with 3 malonyl-CoA units. Further modifications by the decarboxylase orsB and the tyrosinase-like protein orsC lead to the production of F9775 A and F9775 B. The functions of orsD and orsE remain unclear since only orsB and orsC are required to convert orsellinic acid into F9775 A and F9775 B. The protein is Orsellinic acid/F9775 biosynthesis cluster protein D of Emericella nidulans (strain FGSC A4 / ATCC 38163 / CBS 112.46 / NRRL 194 / M139) (Aspergillus nidulans).